Reading from the N-terminus, the 208-residue chain is Large ribosomal subunit protein uL3 (208 aa).

The tract at residues 130–168 (GGSKTHGQSDRLRAPGSVGGSSFPSRTFKGQRMAGRKGS) is disordered.

Belongs to the universal ribosomal protein uL3 family. Part of the 50S ribosomal subunit. Forms a cluster with proteins L14 and L19.

One of the primary rRNA binding proteins, it binds directly near the 3'-end of the 23S rRNA, where it nucleates assembly of the 50S subunit. The chain is Large ribosomal subunit protein uL3 from Chloroherpeton thalassium (strain ATCC 35110 / GB-78).